The sequence spans 513 residues: ATP synthase subunit alpha 1 (513 aa).

ATP is bound at residue 169–176; sequence GDRQTGKT.

The protein belongs to the ATPase alpha/beta chains family. F-type ATPases have 2 components, CF(1) - the catalytic core - and CF(0) - the membrane proton channel. CF(1) has five subunits: alpha(3), beta(3), gamma(1), delta(1), epsilon(1). CF(0) has three main subunits: a(1), b(2) and c(9-12). The alpha and beta chains form an alternating ring which encloses part of the gamma chain. CF(1) is attached to CF(0) by a central stalk formed by the gamma and epsilon chains, while a peripheral stalk is formed by the delta and b chains.

It localises to the cell inner membrane. It catalyses the reaction ATP + H2O + 4 H(+)(in) = ADP + phosphate + 5 H(+)(out). Its function is as follows. Produces ATP from ADP in the presence of a proton gradient across the membrane. The alpha chain is a regulatory subunit. The chain is ATP synthase subunit alpha 1 from Vibrio campbellii (strain ATCC BAA-1116).